We begin with the raw amino-acid sequence, 489 residues long: Glycogen synthase (489 aa).

Arg-20 is an ADP-alpha-D-glucose binding site.

Belongs to the glycosyltransferase 1 family. Bacterial/plant glycogen synthase subfamily.

The enzyme catalyses [(1-&gt;4)-alpha-D-glucosyl](n) + ADP-alpha-D-glucose = [(1-&gt;4)-alpha-D-glucosyl](n+1) + ADP + H(+). Its pathway is glycan biosynthesis; glycogen biosynthesis. Synthesizes alpha-1,4-glucan chains using ADP-glucose. This Chlorobium chlorochromatii (strain CaD3) protein is Glycogen synthase.